Consider the following 238-residue polypeptide: MSSPDQNPSDAAGQTGSSNEEVVDVRRGMFGVKGTGDTSGYGRLVREIVLPGSSPRPYGFYFDEIADRLAEALNRDGVEFEDAIEKVVVYRNELTLHVRREALLRVAQSLRDEPELRFELCLGVNGVHYPHETGRELHAVYPLQSITHNRRLRLEVSAPDSDPHIPSLYAVYPTNDWHERETYDFFGIIFDGHPSLTRIEMPDDWQGHPQRKDYPLGGIPVEYKGAQIPPPDERRGYN.

Residues 1–20 (MSSPDQNPSDAAGQTGSSNE) form a disordered region.

The protein belongs to the complex I 30 kDa subunit family. NDH-1 is composed of 14 different subunits. Subunits NuoB, C, D, E, F, and G constitute the peripheral sector of the complex.

It localises to the cell membrane. It catalyses the reaction a quinone + NADH + 5 H(+)(in) = a quinol + NAD(+) + 4 H(+)(out). NDH-1 shuttles electrons from NADH, via FMN and iron-sulfur (Fe-S) centers, to quinones in the respiratory chain. The immediate electron acceptor for the enzyme in this species is believed to be a menaquinone. Couples the redox reaction to proton translocation (for every two electrons transferred, four hydrogen ions are translocated across the cytoplasmic membrane), and thus conserves the redox energy in a proton gradient. The sequence is that of NADH-quinone oxidoreductase subunit C from Mycobacterium marinum (strain ATCC BAA-535 / M).